Reading from the N-terminus, the 213-residue chain is Ras-related protein Rab-25 (213 aa).

Residues Ser-21, Gly-24, Lys-25, Thr-26, Asn-27, Ser-38, His-39, Thr-43, and Thr-44 each contribute to the GTP site. Residue Thr-26 participates in Mg(2+) binding. 2 short sequence motifs (switch) span residues Asn-35 to Phe-49 and Asp-67 to Gly-84. Thr-44 and Asp-67 together coordinate Mg(2+). Gly-70, Asn-125, Lys-126, Asp-128, Ala-156, and Leu-157 together coordinate GTP. Residues Cys-209 and Cys-210 are each lipidated (S-geranylgeranyl cysteine). Cys-210 is modified (cysteine methyl ester). The propeptide at Ile-211 to Leu-213 is removed in mature form.

It belongs to the small GTPase superfamily. Rab family. In terms of assembly, interacts (GTP-bound form) with RAB11FIP1, RAB11FIP2, RAB11FIP3 and RAB11FIP4. Interacts (via the hypervariable C-terminal region) with ITGB1 (via the cytoplasmic region); the interaction is GTP-dependent. Interacts with ITGAV. Associates with the integrin alpha-V/beta-1 heterodimer. Interacts with VPS33B. Requires Mg(2+) as cofactor.

Its subcellular location is the cell membrane. The protein localises to the cell projection. It is found in the pseudopodium membrane. The protein resides in the cytoplasmic vesicle. The catalysed reaction is GTP + H2O = GDP + phosphate + H(+). Regulated by guanine nucleotide exchange factors (GEFs) which promote the exchange of bound GDP for free GTP. Regulated by GTPase activating proteins (GAPs) which increase the GTP hydrolysis activity. Inhibited by GDP dissociation inhibitors (GDIs) which prevent Rab-GDP dissociation. In terms of biological role, the small GTPases Rab are key regulators of intracellular membrane trafficking, from the formation of transport vesicles to their fusion with membranes. Rabs cycle between an inactive GDP-bound form and an active GTP-bound form that is able to recruit to membranes different set of downstream effectors directly responsible for vesicle formation, movement, tethering and fusion. RAB25 regulates epithelial cell differentiation, proliferation and survival, thereby playing key roles in tumorigenesis. Promotes invasive migration of cells in which it functions to localize and maintain integrin alpha-V/beta-1 at the tips of extending pseudopodia. Involved in the regulation of epithelial morphogenesis through the control of CLDN4 expression and localization at tight junctions. May selectively regulate the apical recycling pathway. Together with MYO5B regulates transcytosis. The chain is Ras-related protein Rab-25 (RAB25) from Bos taurus (Bovine).